The primary structure comprises 427 residues: Isoprenylcysteine alpha-carbonyl methylesterase ICME (427 aa).

Positions Glu-26–Arg-59 are disordered. Helical transmembrane passes span Leu-102–Ser-122 and Val-157–Leu-177. Residues Gly-163–Ala-165 and Gln-234–Ala-236 contribute to the substrate site. Active-site residues include Ser-235, Asp-336, and His-368.

Belongs to the AB hydrolase superfamily. Isoprenylcysteine methylesterase family. As to expression, expressed in roots, rosette and cauline leaves, stems, flowers and siliques.

It is found in the endoplasmic reticulum membrane. Its subcellular location is the golgi apparatus membrane. It catalyses the reaction [protein]-C-terminal S-[(2E,6E)-farnesyl]-L-cysteine methyl ester + H2O = [protein]-C-terminal S-[(2E,6E)-farnesyl]-L-cysteine + methanol + H(+). In terms of biological role, catalyzes the demethylation of isoprenylcysteine methylesters. In vitro, is specific for N-acetyl-S-farnesyl-L-cysteine methyl ester (AFCme) and has low activity toward N-acetyl-S-geranyl-L-cysteine methyl ester (AGCme). Acts as a positive regulator of ABA signaling. May be involved in the demethylation and inactivation of isoprenylated negative regulators of abscisic acid (ABA) signaling. Carboxyl methylation is a reversible and potentially regulated step in the post-translational modification of prenylated proteins. This chain is Isoprenylcysteine alpha-carbonyl methylesterase ICME, found in Arabidopsis thaliana (Mouse-ear cress).